A 330-amino-acid chain; its full sequence is Pantothenate kinase (330 aa).

Residue 108-115 participates in ATP binding; that stretch reads GSVAVGKS.

The protein belongs to the prokaryotic pantothenate kinase family.

It localises to the cytoplasm. The catalysed reaction is (R)-pantothenate + ATP = (R)-4'-phosphopantothenate + ADP + H(+). It functions in the pathway cofactor biosynthesis; coenzyme A biosynthesis; CoA from (R)-pantothenate: step 1/5. This is Pantothenate kinase from Allorhizobium ampelinum (strain ATCC BAA-846 / DSM 112012 / S4) (Agrobacterium vitis (strain S4)).